A 1978-amino-acid chain; its full sequence is Sodium channel protein type 8 subunit alpha (1978 aa).

Disordered stretches follow at residues 1 to 20 (MAAR…FTPE) and 28 to 62 (RIAE…LEAG). The Cytoplasmic segment spans residues 1 to 132 (MAARLLAPPG…RIAIKILIHS (132 aa)). Residues 28–61 (RIAESKLKKPPKADGSHREDDEDSKPKPNSDLEA) show a composition bias toward basic and acidic residues. The I repeat unit spans residues 114–442 (ILSPFNLIRR…KAMLEQLKKQ (329 aa)). A helical transmembrane segment spans residues 133–151 (VFSMIIMCTILTNCVFMTF). The Extracellular segment spans residues 152–158 (SNPPEWS). The chain crosses the membrane as a helical span at residues 159–179 (KNVEYTFTGIYTFESLVKIIA). Over 180 to 193 (RGFCIDGFTFLRDP) the chain is Cytoplasmic. The helical transmembrane segment at 194 to 211 (WNWLDFSVIMMAYVTEFV) threads the bilayer. At 212–217 (DLGNVS) the chain is on the extracellular side. An N-linked (GlcNAc...) asparagine glycan is attached at Asn215. Residues 218 to 234 (ALRTFRVLRALKTISVI) form a helical membrane-spanning segment. Over 235–253 (PGLKTIVGALIQSVKKLSD) the chain is Cytoplasmic. A helical membrane pass occupies residues 254-273 (VMILTVFCLSVFALIGLQLF). Topologically, residues 274-355 (MGNLRNKCVV…PNYGYTSFDT (82 aa)) are extracellular. Cys281 and Cys333 are oxidised to a cystine. Asn289, Asn295, Asn308, and Asn326 each carry an N-linked (GlcNAc...) asparagine glycan. The segment at residues 356–380 (FSWAFLALFRLMTQDYWENLYQLTL) is an intramembrane region (pore-forming). Glu373 provides a ligand contact to Na(+). Residues 381-387 (RAAGKTY) lie on the Extracellular side of the membrane. The helical transmembrane segment at 388–408 (MIFFVLVIFVGSFYLVNLILA) threads the bilayer. Residues 409-751 (VVAMAYEEQN…EIVNLIVMDP (343 aa)) lie on the Cytoplasmic side of the membrane. 2 disordered regions span residues 446 to 530 (AQAA…KAFR) and 576 to 597 (DPGS…SEGR). Positions 473–486 (SPRSSSELSKLSSK) are enriched in low complexity. The span at 489 to 500 (KERRNRRKKRKQ) shows a compositional bias: basic residues. Basic and acidic residues-rich tracts occupy residues 501–530 (KELS…KAFR) and 586–597 (DEHSTVEESEGR). Ser518 and Ser520 each carry phosphoserine. One copy of the II repeat lies at 733–1005 (CHPYWIKLKE…QISVIRIKKG (273 aa)). A helical membrane pass occupies residues 752 to 770 (FVDLAITICIVLNTLFMAM). Residues 771–781 (EHHPMTPQFEH) are Extracellular-facing. Residues 782 to 801 (VLAVGNLVFTGIFTAEMFLK) traverse the membrane as a helical segment. Over 802–815 (LIAMDPYYYFQEGW) the chain is Cytoplasmic. Residues 816-835 (NIFDGFIVSLSLMELSLADV) traverse the membrane as a helical segment. At 836–837 (EG) the chain is on the extracellular side. The helical transmembrane segment at 838-855 (LSVLRSFRLLRVFKLAKS) threads the bilayer. Topologically, residues 856-871 (WPTLNMLIKIIGNSVG) are cytoplasmic. Residues 872–890 (ALGNLTLVLAIIVFIFAVV) traverse the membrane as a helical segment. At 891–919 (GMQLFGKSYKECVCKINQECKLPRWHMND) the chain is on the extracellular side. Cys904 and Cys910 are oxidised to a cystine. An intramembrane region (pore-forming) is located at residues 920–940 (FFHSFLIVFRVLCGEWIETMW). 2 residues coordinate Na(+): Glu934 and Glu937. Over 941-953 (DCMEVAGQAMCLI) the chain is Extracellular. Cys942 and Cys951 form a disulfide bridge. The helical transmembrane segment at 954–974 (VFMMVMVIGNLVVLNLFLALL) threads the bilayer. The Cytoplasmic segment spans residues 975–1197 (LSSFSADNLA…TCFLIVEHNW (223 aa)). A disordered region spans residues 1105-1146 (NLNTEDVSSESDPEGSKDKLDDTSSSEGSTIDIKPEVEEVPV). Residues 1178 to 1493 (LGKSWWILRK…KKYYNAMKKL (316 aa)) form an III repeat. The chain crosses the membrane as a helical span at residues 1198–1215 (FETFIIFMILLSSGALAF). Residues 1216–1228 (EDIYIEQRKTIRT) are Extracellular-facing. A helical transmembrane segment spans residues 1229–1247 (ILEYADKVFTYIFILEMLL). Over 1248 to 1261 (KWTAYGFVKFFTNA) the chain is Cytoplasmic. A helical transmembrane segment spans residues 1262 to 1280 (WCWLDFLIVAVSLVSLIAN). Over 1281–1288 (ALGYSELG) the chain is Extracellular. Residues 1289-1307 (AIKSLRTLRALRPLRALSR) form a helical membrane-spanning segment. The Cytoplasmic portion of the chain corresponds to 1308–1324 (FEGMRVVVNALVGAIPS). The chain crosses the membrane as a helical span at residues 1325–1344 (IMNVLLVCLIFWLIFSIMGV). The Extracellular segment spans residues 1345–1397 (NLFAGKYHYCFNETSEIRFEIDIVNNKTDCEKLMEGNSTEIRWKNVKINFDNV). Cys1354 and Cys1374 are oxidised to a cystine. Asn1356, Asn1370, and Asn1381 each carry an N-linked (GlcNAc...) asparagine glycan. An intramembrane region (pore-forming) is located at residues 1398-1419 (GAGYLALLQVATFKGWMDIMYA). Residues 1420-1436 (AVDSRKPDEQPDYEGNI) lie on the Extracellular side of the membrane. Residues 1437–1458 (YMYIYFVIFIIFGSFFTLNLFI) form a helical membrane-spanning segment. Residues 1459–1521 (GVIIDNFNQQ…IVFDFVTQQA (63 aa)) lie on the Cytoplasmic side of the membrane. Ser1495 carries the post-translational modification Phosphoserine; by PKC. One copy of the IV repeat lies at 1502–1799 (IPRPLNKIQG…WEKFDPDATQ (298 aa)). A helical transmembrane segment spans residues 1522–1539 (FDIVIMMLICLNMVTMMV). Over 1540 to 1550 (ETDTQSKQMEN) the chain is Extracellular. A helical transmembrane segment spans residues 1551–1569 (ILYWINLVFVIFFTCECVL). Residues 1570 to 1581 (KMFALRHYYFTI) are Cytoplasmic-facing. The helical transmembrane segment at 1582–1599 (GWNIFDFVVVILSIVGMF) threads the bilayer. The Extracellular segment spans residues 1600 to 1612 (LADIIEKYFVSPT). The helical transmembrane segment at 1613 to 1629 (LFRVIRLARIGRILRLI) threads the bilayer. Residues 1630-1648 (KGAKGIRTLLFALMMSLPA) are Cytoplasmic-facing. A helical transmembrane segment spans residues 1649–1666 (LFNIGLLLFLVMFIFSIF). Over 1667–1688 (GMSNFAYVKHEAGIDDMFNFET) the chain is Extracellular. Residues 1689–1711 (FGNSMICLFQITTSAGWDGLLLP) constitute an intramembrane region (pore-forming). The Extracellular portion of the chain corresponds to 1712-1740 (ILNRPPDCSLDKEHPGSGFKGDCGNPSVG). An intrachain disulfide couples Cys1719 to Cys1734. A helical transmembrane segment spans residues 1741–1763 (IFFFVSYIIISFLIVVNMYIAII). Residues 1764–1978 (LENFSVATEE…RQKEVRESKC (215 aa)) lie on the Cytoplasmic side of the membrane. The 30-residue stretch at 1893 to 1922 (EEVSAVVLQRAYRGHLARRGFICRKMASNK) folds into the IQ domain. A disordered region spans residues 1923-1978 (LENGGTHRDKKESTPSTASLPSYDSVTKPDKEKQQRAEEGRRERAKRQKEVRESKC). The segment covering 1936 to 1947 (TPSTASLPSYDS) has biased composition (polar residues). A compositionally biased stretch (basic and acidic residues) spans 1949-1978 (TKPDKEKQQRAEEGRRERAKRQKEVRESKC).

Belongs to the sodium channel (TC 1.A.1.10) family. Nav1.6/SCN8A subfamily. In terms of assembly, the voltage-sensitive sodium channel consists of an ion-conducting pore-forming alpha subunit regulated by one or more beta-1 (SCN1B), beta-2 (SCN2B), beta-3 (SCN3B) and/or beta-4 (SCN4B) subunits. Beta-1 (SCN1B) and beta-3 (SCN3B) are non-covalently associated with alpha, while beta-2 (SCN2B) and beta-4 (SCN4B) are covalently linked by disulfide bonds. Interacts with NEDD4 and NEDD4L. Interacts with FGF13. Interacts with FGF14, GBG3, GBB2 and SCN1B. Interacts with TMEM233. Interacts with the conotoxin GVIIJ. Interacts with CALM1; the interaction modulates the inactivation rate of SCN8A. In terms of processing, may be ubiquitinated by NEDD4L; which would promote its endocytosis. Phosphorylation at Ser-1495 by PKC in a highly conserved cytoplasmic loop slows inactivation of the sodium channel and reduces peak sodium currents. As to expression, isoform 1 is highly expressed in brain, moderately in spinal cord, and at low levels in dorsal root ganglia, nodose ganglia and superior cervical ganglia. Not detected in sciatic nerve and non-neuronal tissues. Isoform 2 is hardly detectable, if at all, in brain, expressed at low levels in spinal cord and at highest levels in dorsal root ganglia.

Its subcellular location is the cell membrane. The protein resides in the cell projection. It localises to the axon. The enzyme catalyses Na(+)(in) = Na(+)(out). Its function is as follows. Pore-forming subunit of a voltage-gated sodium channel complex assuming opened or closed conformations in response to the voltage difference across membranes and through which sodium ions selectively pass along their electrochemical gradient. Contributes to neuronal excitability by regulating action potential threshold and propagation. This chain is Sodium channel protein type 8 subunit alpha, found in Rattus norvegicus (Rat).